The following is a 239-amino-acid chain: MQKLELLYEGKAKRIYRTESADMVWVEYKDSATAFNGEKKETITGKGRLNNEITTLLFRKLQEVGIKTHFVEKLSETEQLVKKVSIIPLEVVTRNVIAGSLSKRLGMEEGTVLAEPIVEFYFKDDDLGDPLVTEDHIRVLNVASPEQVSVLRDMALQINQVLIDHFASCRVRLVDFKLEFGVTDEGEIILADEISPDTCRLWDETSNEKFDKDVFRRDLGNLTDAYEEILKRLGGISHV.

Belongs to the SAICAR synthetase family.

It carries out the reaction 5-amino-1-(5-phospho-D-ribosyl)imidazole-4-carboxylate + L-aspartate + ATP = (2S)-2-[5-amino-1-(5-phospho-beta-D-ribosyl)imidazole-4-carboxamido]succinate + ADP + phosphate + 2 H(+). The protein operates within purine metabolism; IMP biosynthesis via de novo pathway; 5-amino-1-(5-phospho-D-ribosyl)imidazole-4-carboxamide from 5-amino-1-(5-phospho-D-ribosyl)imidazole-4-carboxylate: step 1/2. This is Phosphoribosylaminoimidazole-succinocarboxamide synthase from Bacillus cereus (strain AH187).